Here is a 277-residue protein sequence, read N- to C-terminus: Undecaprenyl-diphosphatase (277 aa).

6 helical membrane-spanning segments follow: residues 47 to 67 (FNII…RGKI), 85 to 105 (ANLL…ADLI), 108 to 128 (WLFN…VMLW), 183 to 203 (AATE…AVYS), 218 to 238 (VFAV…RALL), and 249 to 269 (FAWY…FHLI).

Belongs to the UppP family.

It localises to the cell inner membrane. It catalyses the reaction di-trans,octa-cis-undecaprenyl diphosphate + H2O = di-trans,octa-cis-undecaprenyl phosphate + phosphate + H(+). In terms of biological role, catalyzes the dephosphorylation of undecaprenyl diphosphate (UPP). Confers resistance to bacitracin. The protein is Undecaprenyl-diphosphatase of Pseudomonas aeruginosa (strain UCBPP-PA14).